Reading from the N-terminus, the 100-residue chain is MKLLPREKDKLLLFTAALLAEKRRNRGLKLNYPEAIALISAVILEGAREGKSVAELMDVGKNVLTRDDVMIGVPEMITNVQVEATFSDGTKLVTVHDPII.

It belongs to the urease gamma subunit family. As to quaternary structure, heterotrimer of UreA (gamma), UreB (beta) and UreC (alpha) subunits. Three heterotrimers associate to form the active enzyme.

Its subcellular location is the cytoplasm. It catalyses the reaction urea + 2 H2O + H(+) = hydrogencarbonate + 2 NH4(+). Its pathway is nitrogen metabolism; urea degradation; CO(2) and NH(3) from urea (urease route): step 1/1. The sequence is that of Urease subunit gamma from Blochmanniella pennsylvanica (strain BPEN).